The following is a 570-amino-acid chain: Berberine bridge enzyme-like 19 (570 aa).

The first 30 residues, 1-30 (MLTTPPRTFVSVPFFFFFLLFLSLPLSSFS), serve as a signal peptide directing secretion. The cysteines at positions 42 and 105 are disulfide-linked. Residue Asn-80 is glycosylated (N-linked (GlcNAc...) asparagine). An FAD-binding PCMH-type domain is found at 83–257 (STLKPTIIIT…LGYKVKLVPV (175 aa)). A cross-link (6-(S-cysteinyl)-8alpha-(pros-histidyl)-FAD (His-Cys)) is located at residues 120–182 (HDYDGLSYIS…RVHGFPAGVC (63 aa)). Residues Asn-341 and Asn-359 are each glycosylated (N-linked (GlcNAc...) asparagine).

Belongs to the oxygen-dependent FAD-linked oxidoreductase family. It depends on FAD as a cofactor. In terms of processing, the FAD cofactor is bound via a bicovalent 6-S-cysteinyl, 8alpha-N1-histidyl FAD linkage.

The protein resides in the secreted. The protein localises to the cell wall. This Arabidopsis thaliana (Mouse-ear cress) protein is Berberine bridge enzyme-like 19.